The chain runs to 268 residues: MSSRAIGAPQEGADMKNKAARLGTYTNWPVQFLEPSRMAASGFYYLGRGDEVRCAFCKVEITNWVRGDDPETDHKRWAPQCPFVRNNAHDTPHDRAPPARSAAAHPQYATEAARLRTFAEWPRGLKQRPEELAEAGFFYTGQGDKTRCFCCDGGLKDWEPDDAPWQQHARWYDRCEYVLLVKGRDFVQRVMTEACVVRDADNEPHIERPAVEAEVADDRLCKICLGAEKTVCFVPCGHVVACGKCAAGVTTCPVCRGQLDKAVRMYQV.

BIR repeat units lie at residues 18–84 and 111–178; these read KAAR…CPFV and EAAR…CEYV. Residues cysteine 148, cysteine 151, histidine 168, and cysteine 175 each contribute to the Zn(2+) site. The RING-type zinc finger occupies 221 to 256; it reads CKICLGAEKTVCFVPCGHVVACGKCAAGVTTCPVCR.

Belongs to the IAP family. Auto-ubiquitinated.

It catalyses the reaction S-ubiquitinyl-[E2 ubiquitin-conjugating enzyme]-L-cysteine + [acceptor protein]-L-lysine = [E2 ubiquitin-conjugating enzyme]-L-cysteine + N(6)-ubiquitinyl-[acceptor protein]-L-lysine.. In terms of biological role, RING-finger E3 ubiquitin ligase required to prevent cellular apoptosis in infected cells. Ubiquitinates and subsequently targets host pro-apoptotic cellular proteins such as HID for degradation by the proteasome. This chain is E3 ubiquitin-protein ligase IAP-3 (IAP3), found in Orgyia pseudotsugata multicapsid polyhedrosis virus (OpMNPV).